A 561-amino-acid polypeptide reads, in one-letter code: MLQIKQDLLDALGQALKTMAPDSGVAAVFESPKVAAHGDFASTAAMQLAKPLKLNPRQVAENLRGLLLQAPAFARWVDAIEIAGPGFLNIRLKPEAKQQVVREVLQGADQYGMQLADSPHRMVVEFVSANPTGPLHVGHGRQAALGDAICNLFDTQGWDVWREFYYNDAGVQIQTLATSTQARAKGLKPGDAGWPEPAYNGDYIADIANDFLAKKTVKSDDREFTASGDVEDIDAIRQFAVAYLRHEQDLDLRAFSVRFDNYYLESSLYSSGRVDSAVQKLKDAGKTYEQDGALWLKSTDYGDDKDRVMKKGDGSYTYFVPDVAYHLAKWERGFSKAINIQGMDHHGTIARVRAGLQAASAGIPQGYPDYVLHTMVRVVRHGEEVKISKRAGSYVTLRDLIEWTSADAVRFFLLSRKPDTEYVFDIDLALAKNNENPVYYVQYAHARICSILGTWAAQGGDASQLKSVDLSALDGPQAQALMLLLAKYPDMLSNAAAGLAPHDVAFYLRELAACYHSYYDAERILVDDEAIKLARLALVAATAQVLHNGLKVLGVSAPHKM.

A 'HIGH' region motif is present at residues 129-139 (ANPTGPLHVGH).

This sequence belongs to the class-I aminoacyl-tRNA synthetase family. Monomer.

Its subcellular location is the cytoplasm. The catalysed reaction is tRNA(Arg) + L-arginine + ATP = L-arginyl-tRNA(Arg) + AMP + diphosphate. The protein is Arginine--tRNA ligase of Polaromonas sp. (strain JS666 / ATCC BAA-500).